Consider the following 84-residue polypeptide: Putative lipoprotein RzoQ (84 aa).

The signal sequence occupies residues M1 to S22. The N-palmitoyl cysteine moiety is linked to residue C23. The S-diacylglycerol cysteine moiety is linked to residue C23.

The protein resides in the cell membrane. The sequence is that of Putative lipoprotein RzoQ (rzoQ) from Escherichia coli (strain K12).